Here is an 862-residue protein sequence, read N- to C-terminus: Protein translocase subunit SecA (862 aa).

ATP-binding positions include glutamine 86, 104–108 (GEGKT), and aspartate 499. The Zn(2+) site is built by cysteine 848, cysteine 850, cysteine 859, and histidine 860.

Belongs to the SecA family. Monomer and homodimer. Part of the essential Sec protein translocation apparatus which comprises SecA, SecYEG and auxiliary proteins SecDF-YajC and YidC. It depends on Zn(2+) as a cofactor.

Its subcellular location is the cell inner membrane. It is found in the cytoplasm. The catalysed reaction is ATP + H2O + cellular proteinSide 1 = ADP + phosphate + cellular proteinSide 2.. In terms of biological role, part of the Sec protein translocase complex. Interacts with the SecYEG preprotein conducting channel. Has a central role in coupling the hydrolysis of ATP to the transfer of proteins into and across the cell membrane, serving both as a receptor for the preprotein-SecB complex and as an ATP-driven molecular motor driving the stepwise translocation of polypeptide chains across the membrane. This chain is Protein translocase subunit SecA, found in Ehrlichia canis (strain Jake).